The primary structure comprises 309 residues: Protein FdhE (309 aa).

This sequence belongs to the FdhE family.

It localises to the cytoplasm. Necessary for formate dehydrogenase activity. This chain is Protein FdhE, found in Escherichia coli O9:H4 (strain HS).